The primary structure comprises 358 residues: Hydroxyproline O-arabinosyltransferase 3 (358 aa).

The chain crosses the membrane as a helical; Signal-anchor span at residues 8–28 (LLFLLGFGFFVVTYNLLTLIV).

In terms of tissue distribution, ubiquitous.

The protein resides in the golgi apparatus. It is found in the cis-Golgi network membrane. It catalyses the reaction trans-4-hydroxy-L-prolyl-[protein] + UDP-beta-L-arabinofuranose = O-(beta-L-arabinofuranosyl)-trans-4-hydroxy-L-prolyl-[protein] + UDP + H(+). Its function is as follows. Glycosyltransferase involved in the O-arabinosylation of several proteins including extensins and small signaling peptides. Catalyzes the transfer of the initial L-arabinose to the hydroxyl group of Hyp residues. Contributes redundantly with HPAT1 and HPAT2 to arabinosylation of EXT3, but main contributor to arabinosylation of CLE peptides. The protein is Hydroxyproline O-arabinosyltransferase 3 of Arabidopsis thaliana (Mouse-ear cress).